Consider the following 137-residue polypeptide: Bacteriohemerythrin (137 aa).

The Fe cation site is built by His-21, His-53, Glu-57, His-72, His-76, His-112, and Asp-117.

It belongs to the hemerythrin family. As to quaternary structure, monomer.

Functionally, oxygen-binding protein. May be involved in a storage mechanism or for delivery to oxygen-requiring enzymes. The oxygen-binding site contains two iron atoms. This chain is Bacteriohemerythrin, found in Ralstonia nicotianae (strain ATCC BAA-1114 / GMI1000) (Ralstonia solanacearum).